The primary structure comprises 291 residues: RPE-retinal G protein-coupled receptor (291 aa).

Residues 1–15 (MAETSALPTGFGELE) are Extracellular-facing. The helical transmembrane segment at 16–36 (VLAVGMVLLVEALSGLSLNTL) threads the bilayer. At 37–52 (TIFSFCKTPELRTPCH) the chain is on the cytoplasmic side. A helical membrane pass occupies residues 53–73 (LLVLSLALADSGISLNALVAA). Over 74-91 (TSSLLRRWPYGSDGCQAH) the chain is Extracellular. Residues Cys-88 and Cys-162 are joined by a disulfide bond. Residues 92–112 (GFQGFVTALASICSSAAIAWG) form a helical membrane-spanning segment. The Cytoplasmic segment spans residues 113 to 130 (RYHHYCTRSQLAWNSAVS). Residues 131–151 (LVLFVWLSSAFWAALPLLGWG) traverse the membrane as a helical segment. Topologically, residues 152–175 (HYDYEPLGTCCTLDYSKGDRNFTS) are extracellular. Residue Asn-172 is glycosylated (N-linked (GlcNAc...) asparagine). A helical transmembrane segment spans residues 176–196 (FLFTMSFFNFAMPLFITITSY). Topologically, residues 197 to 219 (SLMEQKLGKSGHLQVNTTLPART) are cytoplasmic. A helical membrane pass occupies residues 220–240 (LLLGWGPYAILYLYAVIADVT). Residues 241–247 (SISPKLQ) lie on the Extracellular side of the membrane. A helical membrane pass occupies residues 248 to 268 (MVPALIAKMVPTINAINYALG). Lys-255 bears the N6-(retinylidene)lysine mark. The Cytoplasmic portion of the chain corresponds to 269–291 (NEMVCRGIWQCLSPQKREKDRTK).

It belongs to the G-protein coupled receptor 1 family. Opsin subfamily. Covalently binds all-trans- and 11-cis-retinal. Preferentially expressed at high levels in the retinal pigment epithelium (RPE) and Mueller cells of the neural retina.

Its subcellular location is the membrane. In terms of biological role, receptor for all-trans- and 11-cis-retinal. Binds preferentially to the former and may catalyze the isomerization of the chromophore by a retinochrome-like mechanism. This Homo sapiens (Human) protein is RPE-retinal G protein-coupled receptor (RGR).